A 391-amino-acid polypeptide reads, in one-letter code: Trehalose-phosphate phosphatase (391 aa).

Aspartate 147 (nucleophile) is an active-site residue. Mg(2+) contacts are provided by aspartate 147, aspartate 149, and aspartate 330. A substrate-binding site is contributed by 147–149 (DFD).

Belongs to the trehalose phosphatase family. It depends on Mg(2+) as a cofactor.

The catalysed reaction is alpha,alpha-trehalose 6-phosphate + H2O = alpha,alpha-trehalose + phosphate. Its pathway is glycan biosynthesis; trehalose biosynthesis. Functionally, removes the phosphate from trehalose 6-phosphate to produce free trehalose. The polypeptide is Trehalose-phosphate phosphatase (otsB) (Mycobacterium avium (strain 104)).